Consider the following 266-residue polypeptide: Small ribosomal subunit protein eS1 (266 aa).

The interval 234 to 266 (EGGTGTATKATGDDTGAKVERADGYEPPIQETV) is disordered. Over residues 244–257 (TGDDTGAKVERADG) the composition is skewed to basic and acidic residues.

This sequence belongs to the eukaryotic ribosomal protein eS1 family. As to quaternary structure, component of the small ribosomal subunit. Mature ribosomes consist of a small (40S) and a large (60S) subunit. The 40S subunit contains about 33 different proteins and 1 molecule of RNA (18S). The 60S subunit contains about 49 different proteins and 3 molecules of RNA (28S, 5.8S and 5S). Part of the small subunit (SSU) processome, composed of more than 70 proteins and the RNA chaperone small nucleolar RNA (snoRNA) U3.

It is found in the cytoplasm. The protein resides in the nucleus. The protein localises to the nucleolus. In terms of biological role, component of the small ribosomal subunit. The ribosome is a large ribonucleoprotein complex responsible for the synthesis of proteins in the cell. Part of the small subunit (SSU) processome, first precursor of the small eukaryotic ribosomal subunit. During the assembly of the SSU processome in the nucleolus, many ribosome biogenesis factors, an RNA chaperone and ribosomal proteins associate with the nascent pre-rRNA and work in concert to generate RNA folding, modifications, rearrangements and cleavage as well as targeted degradation of pre-ribosomal RNA by the RNA exosome. May play a role during erythropoiesis. This chain is Small ribosomal subunit protein eS1 (rps3a), found in Solea senegalensis (Senegalese sole).